We begin with the raw amino-acid sequence, 374 residues long: Chaperone protein DnaJ (374 aa).

The 66-residue stretch at 5 to 70 folds into the J domain; the sequence is DFYEILGLGK…QKRDAYDRYG (66 aa). The tract at residues 28–47 is disordered; the sequence is LAMKHHPDRNPDSKGAEDKF. Over residues 35-47 the composition is skewed to basic and acidic residues; that stretch reads DRNPDSKGAEDKF. The segment at 134–212 adopts a CR-type zinc-finger fold; it reads GYDTTIRVPS…CSGAGKIKRN (79 aa). Residues cysteine 147, cysteine 150, cysteine 164, cysteine 167, cysteine 186, cysteine 189, cysteine 200, and cysteine 203 each contribute to the Zn(2+) site. CXXCXGXG motif repeat units lie at residues 147-154, 164-171, 186-193, and 200-207; these read CETCDGSG, CTTCGGHG, CPKCHGSG, and CTACSGAG.

This sequence belongs to the DnaJ family. As to quaternary structure, homodimer. It depends on Zn(2+) as a cofactor.

It localises to the cytoplasm. In terms of biological role, participates actively in the response to hyperosmotic and heat shock by preventing the aggregation of stress-denatured proteins and by disaggregating proteins, also in an autonomous, DnaK-independent fashion. Unfolded proteins bind initially to DnaJ; upon interaction with the DnaJ-bound protein, DnaK hydrolyzes its bound ATP, resulting in the formation of a stable complex. GrpE releases ADP from DnaK; ATP binding to DnaK triggers the release of the substrate protein, thus completing the reaction cycle. Several rounds of ATP-dependent interactions between DnaJ, DnaK and GrpE are required for fully efficient folding. Also involved, together with DnaK and GrpE, in the DNA replication of plasmids through activation of initiation proteins. The polypeptide is Chaperone protein DnaJ (Herminiimonas arsenicoxydans).